The following is a 698-amino-acid chain: Polyribonucleotide nucleotidyltransferase (698 aa).

Residues Asp-485 and Asp-491 each contribute to the Mg(2+) site. Residues 552-611 (PRITTIKINPEKIRDVIGKGGAVIRALTEETGTTIELDDNGTVKIASSNGEATKEAIRRI) enclose the KH domain. The S1 motif domain maps to 621–689 (GRIYNGKVIR…RQGRVRLSIK (69 aa)).

This sequence belongs to the polyribonucleotide nucleotidyltransferase family. As to quaternary structure, component of the RNA degradosome, which is a multiprotein complex involved in RNA processing and mRNA degradation. The cofactor is Mg(2+).

It localises to the cytoplasm. The catalysed reaction is RNA(n+1) + phosphate = RNA(n) + a ribonucleoside 5'-diphosphate. Involved in mRNA degradation. Catalyzes the phosphorolysis of single-stranded polyribonucleotides processively in the 3'- to 5'-direction. This Shewanella frigidimarina (strain NCIMB 400) protein is Polyribonucleotide nucleotidyltransferase.